The chain runs to 338 residues: 5-dehydro-2-deoxygluconokinase (338 aa).

It belongs to the carbohydrate kinase PfkB family.

The catalysed reaction is 5-dehydro-2-deoxy-D-gluconate + ATP = 6-phospho-5-dehydro-2-deoxy-D-gluconate + ADP + H(+). The protein operates within polyol metabolism; myo-inositol degradation into acetyl-CoA; acetyl-CoA from myo-inositol: step 5/7. Functionally, catalyzes the phosphorylation of 5-dehydro-2-deoxy-D-gluconate (2-deoxy-5-keto-D-gluconate or DKG) to 6-phospho-5-dehydro-2-deoxy-D-gluconate (DKGP). In Clostridium perfringens (strain ATCC 13124 / DSM 756 / JCM 1290 / NCIMB 6125 / NCTC 8237 / Type A), this protein is 5-dehydro-2-deoxygluconokinase.